We begin with the raw amino-acid sequence, 261 residues long: Class II histocompatibility antigen, M beta 1 chain (261 aa).

The first 18 residues, 1–18 (MAALWLLLLVLSLHCMGA), serve as a signal peptide directing secretion. The interval 19–112 (GGFVAHVEST…PFWNALTHRT (94 aa)) is beta-1. Residues 19 to 218 (GGFVAHVEST…PGLSPIQTVK (200 aa)) lie on the Lumenal side of the membrane. 3 cysteine pairs are disulfide-bonded: cysteine 29–cysteine 97, cysteine 43–cysteine 53, and cysteine 135–cysteine 192. N-linked (GlcNAc...) asparagine glycosylation is present at asparagine 75. The segment at 113 to 207 (RPPSVRVAQT…GTSEPIRGDW (95 aa)) is beta-2. An Ig-like C1-type domain is found at 114–204 (PPSVRVAQTT…QHSGTSEPIR (91 aa)). The connecting peptide stretch occupies residues 208–218 (TPGLSPIQTVK). The helical transmembrane segment at 219 to 239 (VSVSAATLGLGFIIFCVGFFR) threads the bilayer. The Cytoplasmic segment spans residues 240-261 (WRKSHSSSYTPLSGSTYPEGRH). Residues 248-251 (YTPL) carry the YXXZ motif motif.

It belongs to the MHC class II family. In terms of assembly, heterodimer of an alpha chain (DMA) and a beta chain (DMB). Interacts with MHCII; this interaction mediates rapid selection of high-affinity peptides.

The protein localises to the late endosome membrane. It localises to the lysosome membrane. In terms of biological role, plays a critical role in catalyzing the release of class II-associated invariant chain peptide (CLIP) from newly synthesized MHC class II molecules and freeing the peptide binding site for acquisition of antigenic peptides. This is Class II histocompatibility antigen, M beta 1 chain (H2-DMb1) from Mus musculus (Mouse).